Consider the following 258-residue polypeptide: MKIAILYREEREKEGEFLKEKISKEHEVIEFGEANAPGRVTADLIVVVGGDGTVLKAAKKAADGTPMVGFKAGRLGFLTSYTLDEIDRFLEDLRNWNFREETRWFIQIESELGNHLALNDVTLERDLSGKMVEIEVEVEHHSSMWFFADGVVISTPTGSTAYSLSIGGPIIFPECEVLEISPIAPQFFLTRSVVIPSNFKVVVESQRDINMLVDGVLTGKTKRIEVKKSRRYVRILRPPEYDYVTVIRDKLGYGRRIE.

Aspartate 51 (proton acceptor) is an active-site residue. Residues 51 to 52, 119 to 120, lysine 130, aspartate 149, 160 to 165, and alanine 184 contribute to the NAD(+) site; these read DG, ND, and TAYSLS.

The protein belongs to the NAD kinase family. Homodimer. A divalent metal cation is required as a cofactor.

It localises to the cytoplasm. The catalysed reaction is NAD(+) + ATP = ADP + NADP(+) + H(+). In terms of biological role, involved in the regulation of the intracellular balance between NAD(H) and NADP(H), and is a key enzyme in the biosynthesis of NADP. Catalyzes specifically the phosphorylation on 2'-hydroxyl of the adenosine moiety of NAD to yield NADP. In Thermotoga maritima (strain ATCC 43589 / DSM 3109 / JCM 10099 / NBRC 100826 / MSB8), this protein is NAD kinase (NADK).